A 459-amino-acid polypeptide reads, in one-letter code: MTLHLDDLRVRLLGECRYDSPFAEVLSTKRTSPHYVAEGDRVLLEDTVAMLAEHSLPSVQAPSFEAAGPRRKIYFDPARVTAGIVTCGGLCPGLNNVIRGLVQELSVHYRVKRIVGFRNGPGLTAAHRDDTVELTPEVVRDIHNLGGTILGSSRGGQDADEMVETLALHGVDVMFVIGGDGGMRAATFLSGAIRARGLDIAVIGVPKTIDNDLPFTDQSFGFQSAFARATDFISAVSVEAAASPNGVGIVKLMGRHSGFIAAYAALAANSADVVLIPEVPFALDGDDGLLAHVERLVRAKGFAVVVVAEGAGQDLFDAHGLPQLNGRGTDASGNVKLGNIGELLRTSIEAHLTAAGLAPTMRYIDPSYAIRSIPANAYDSVYCLRLAHAAVHAAMAGRTEAAVARWRRRFVHVPFSLMTRRRNQVDPDGDLWMSVLETTCQPAEFGAVAARERISSGFC.

ATP is bound by residues G89, 154–155 (RG), and 179–182 (GDGG). D180 contributes to the Mg(2+) binding site. Substrate contacts are provided by residues 208-210 (TID), 253-255 (MGR), E309, and 368-371 (YAIR). The active-site Proton acceptor is the D210.

This sequence belongs to the phosphofructokinase type A (PFKA) family. PPi-dependent PFK group II subfamily. Atypical ATP-dependent clade 'X' sub-subfamily. In terms of assembly, homodimer. Requires Mg(2+) as cofactor.

The protein localises to the cytoplasm. It catalyses the reaction beta-D-fructose 6-phosphate + ATP = beta-D-fructose 1,6-bisphosphate + ADP + H(+). Its pathway is carbohydrate degradation; glycolysis; D-glyceraldehyde 3-phosphate and glycerone phosphate from D-glucose: step 3/4. Its activity is regulated as follows. AMP causes 20-40% inhibition and diphosphate causes 20-50% inhibition. ADP, citrate, PEP and FBP have no effect. Functionally, catalyzes the phosphorylation of D-fructose 6-phosphate to fructose 1,6-bisphosphate by ATP, the first committing step of glycolysis. This chain is ATP-dependent 6-phosphofructokinase, found in Amycolatopsis methanolica.